We begin with the raw amino-acid sequence, 524 residues long: B3 domain-containing protein Os07g0183700 (524 aa).

Disordered regions lie at residues 94–152 (DGEG…TSVS) and 191–232 (PLQP…FQTQ). The segment covering 100–109 (CAPPPSPIPA) has biased composition (pro residues). Composition is skewed to low complexity over residues 110–124 (GPAS…SAPA) and 200–232 (AAAA…FQTQ). The segment at residues 336 to 434 (SFVKPLTYTD…EMFMAVRRTR (99 aa)) is a DNA-binding region (TF-B3).

It localises to the nucleus. The sequence is that of B3 domain-containing protein Os07g0183700 from Oryza sativa subsp. japonica (Rice).